The following is a 47-amino-acid chain: Delta-actitoxin-Cgg1b (47 aa).

Pro-3 carries the hydroxyproline modification. 3 disulfides stabilise this stretch: Cys-4–Cys-44, Cys-6–Cys-34, and Cys-27–Cys-45.

It belongs to the sea anemone sodium channel inhibitory toxin family. Type I subfamily.

Its subcellular location is the secreted. It is found in the nematocyst. Functionally, binds voltage-dependently at site 3 of sodium channels (Nav) and inhibits the inactivation, thereby blocking neuronal transmission. The chain is Delta-actitoxin-Cgg1b from Condylactis gigantea (Giant Caribbean anemone).